The following is a 902-amino-acid chain: Protein translocase subunit SecA (902 aa).

ATP-binding positions include Q87, 105-109, and D512; that span reads GEGKT. Disordered regions lie at residues 565-584 and 840-902; these read RRID…PGSS and VEEQ…GKLK. Composition is skewed to basic and acidic residues over residues 840-859 and 873-882; these read VEEQ…HEDA and QVREGAKVGR. 4 residues coordinate Zn(2+): C886, C888, C897, and H898. The segment covering 892 to 902 has biased composition (basic residues); the sequence is KKYKQCHGKLK.

This sequence belongs to the SecA family. In terms of assembly, monomer and homodimer. Part of the essential Sec protein translocation apparatus which comprises SecA, SecYEG and auxiliary proteins SecDF-YajC and YidC. It depends on Zn(2+) as a cofactor.

It localises to the cell inner membrane. The protein resides in the cytoplasm. It carries out the reaction ATP + H2O + cellular proteinSide 1 = ADP + phosphate + cellular proteinSide 2.. Its function is as follows. Part of the Sec protein translocase complex. Interacts with the SecYEG preprotein conducting channel. Has a central role in coupling the hydrolysis of ATP to the transfer of proteins into and across the cell membrane, serving both as a receptor for the preprotein-SecB complex and as an ATP-driven molecular motor driving the stepwise translocation of polypeptide chains across the membrane. The chain is Protein translocase subunit SecA from Alteromonas mediterranea (strain DSM 17117 / CIP 110805 / LMG 28347 / Deep ecotype).